The chain runs to 282 residues: Pantothenate synthetase (282 aa).

ATP is bound at residue 28–35; that stretch reads MGALHSGH. The Proton donor role is filled by histidine 35. Position 59 (glutamine 59) interacts with (R)-pantoate. Residue glutamine 59 coordinates beta-alanine. Residue 146-149 coordinates ATP; the sequence is GEKD. Residue glutamine 152 coordinates (R)-pantoate. ATP is bound by residues valine 175 and 183 to 186; that span reads LSSR.

The protein belongs to the pantothenate synthetase family. In terms of assembly, homodimer.

The protein localises to the cytoplasm. It carries out the reaction (R)-pantoate + beta-alanine + ATP = (R)-pantothenate + AMP + diphosphate + H(+). Its pathway is cofactor biosynthesis; (R)-pantothenate biosynthesis; (R)-pantothenate from (R)-pantoate and beta-alanine: step 1/1. Its function is as follows. Catalyzes the condensation of pantoate with beta-alanine in an ATP-dependent reaction via a pantoyl-adenylate intermediate. The chain is Pantothenate synthetase from Salinispora arenicola (strain CNS-205).